The following is a 399-amino-acid chain: Delta(12) acyl-lipid conjugase (11E,13E-forming) (399 aa).

The interval 11–30 (RNGGGPKKKMGPGQGLGPGE) is disordered. 2 helical membrane passes run 61-81 (FSYL…ADTY) and 93-113 (LAWP…WGIA). Positions 114-118 (HDCGH) match the Histidine box-1 motif. The helical transmembrane segment at 126 to 146 (LVDDVVGFLIHSLVFVPYFSF) threads the bilayer. The Histidine box-2 motif lies at 150–154 (HRRHH). 3 helical membrane-spanning segments follow: residues 188–208 (VFII…FNIS), 232–252 (VLVH…YRIA), and 258–278 (GWLI…VVLI). The Histidine box-3 signature appears at 325 to 329 (HVVHH).

It belongs to the fatty acid desaturase type 1 family. As to expression, expressed in developing seeds, but not in leaves.

It localises to the membrane. The enzyme catalyses a (9Z,12Z)-octadecadienoyl-containing glycerolipid + 2 Fe(II)-[cytochrome b5] + O2 + 2 H(+) = a (9Z,11E,13E)-octadecatrienoyl-containing glycerolipid + 2 Fe(III)-[cytochrome b5] + 2 H2O. The catalysed reaction is (9Z,12Z,15Z)-octadecatrienoyl-containing glycerolipid + 2 Fe(II)-[cytochrome b5] + O2 + 2 H(+) = a (9Z,11E,13E,15Z)-octadecatetraenoyl-containing glycerolipid + 2 Fe(III)-[cytochrome b5] + 2 H2O. It functions in the pathway lipid metabolism; polyunsaturated fatty acid biosynthesis. Functionally, converts linoleic acid to alpha-eleostearic acid (18:3(9Z,11E,13E)) and alpha-linolenic acid to alpha-parinaric acid (18:4(9Z,11E, 13E, 15Z)). Converts a single cis double bond at carbon 12 to two conjugated trans bonds at positions 11 and 13. In Momordica charantia (Bitter gourd), this protein is Delta(12) acyl-lipid conjugase (11E,13E-forming).